A 278-amino-acid chain; its full sequence is MTFGEKLLNAASTRGRLCVGIDPHESLLTSWGLPVNVDGLAEFSRACVEAFADTVALVKPQVAFYERFGSAGFAILEETIQTLRERGCLVVSDAKRGDIGSTMAGYASAWLDPASPLSSDAVTVSPYLGFHSLDPVFELAEQHGRGVFVLAATSNPEARELQDQQNADGVSISQQIVDQAAALNAPYMAQGKAGNIGVVIGATLSKPPRLSTLGGAILMPGVGAQGGTASDVDEIAGDMAHLAFPNVSRSILATGPDIAEMKNSVAKNAADFPGFPRS.

Lys-95 serves as the catalytic Proton donor.

It belongs to the OMP decarboxylase family. Type 2 subfamily.

It catalyses the reaction orotidine 5'-phosphate + H(+) = UMP + CO2. Its pathway is pyrimidine metabolism; UMP biosynthesis via de novo pathway; UMP from orotate: step 2/2. The chain is Orotidine 5'-phosphate decarboxylase from Corynebacterium glutamicum (strain ATCC 13032 / DSM 20300 / JCM 1318 / BCRC 11384 / CCUG 27702 / LMG 3730 / NBRC 12168 / NCIMB 10025 / NRRL B-2784 / 534).